Consider the following 605-residue polypeptide: Threonine--tRNA ligase (605 aa).

The segment at 195–497 (DHRKVGKELG…LIEEYAGDFP (303 aa)) is catalytic. Zn(2+)-binding residues include cysteine 294, histidine 345, and histidine 474.

The protein belongs to the class-II aminoacyl-tRNA synthetase family. In terms of assembly, homodimer. Zn(2+) is required as a cofactor.

It localises to the cytoplasm. It catalyses the reaction tRNA(Thr) + L-threonine + ATP = L-threonyl-tRNA(Thr) + AMP + diphosphate + H(+). Its function is as follows. Catalyzes the attachment of threonine to tRNA(Thr) in a two-step reaction: L-threonine is first activated by ATP to form Thr-AMP and then transferred to the acceptor end of tRNA(Thr). Also edits incorrectly charged L-seryl-tRNA(Thr). The protein is Threonine--tRNA ligase of Thermosynechococcus vestitus (strain NIES-2133 / IAM M-273 / BP-1).